The sequence spans 148 residues: EKC/KEOPS complex subunit Lage3 (148 aa).

The disordered stretch occupies residues 1 to 21 (MQTAHTGLSHTADGADGQTSR).

Belongs to the CTAG/PCC1 family. Component of the EKC/KEOPS complex composed of at least GON7, TP53RK, TPRKB, OSGEP and LAGE3; the whole complex dimerizes.

It is found in the cytoplasm. Its subcellular location is the nucleus. Its function is as follows. Component of the EKC/KEOPS complex that is required for the formation of a threonylcarbamoyl group on adenosine at position 37 (t(6)A37) in tRNAs that read codons beginning with adenine. The complex is probably involved in the transfer of the threonylcarbamoyl moiety of threonylcarbamoyl-AMP (TC-AMP) to the N6 group of A37. LAGE3 functions as a dimerization module for the complex. The polypeptide is EKC/KEOPS complex subunit Lage3 (Mus musculus (Mouse)).